Reading from the N-terminus, the 508-residue chain is MSRKLITINQVKDYVGQEVTIGAWVANKSGKGKLAFLQLRDGTAFFQAVAFKPNFIEKFGEEAGTEKFDVAKRLSQETSVYVTGIVKEDERSKFGYELDVTDLEVIGESQDYPITPKEHGTDFLMDNRHLWLRSRKQVAIQQIRNAIIYATYEFFEKNGFIKFDSPILSGNAAEDSTELFETDYFGQLAYLSQSGQLYLEAGAMALGRVFDFGPVFRAEKSKTRRHLTEFWMMDAEYSFLSHEESLDLQEAYVKALIQGVIDRAPQALETLERDVDALKRYIAEPFKRVAYDDAITLLQEHEADKDTDYEHIEHGDDFGSPHETWISNYFGVPTFVVNYPASFKAFYMKPVPGNPERVLCADLLAPEGYGEIIGGSMREDNYDALVAKMDELGMDKSEYEFYLDLRKYGSVPHGGFGIGIERMVTFVAGTKHIREAIPFPTFVAPLASVIQSSIFPFITSTYEETPFPFSQVQIFSSLLDLVWPSLITVGTSWPITKIKRKNCKIIFP.

The protein belongs to the class-II aminoacyl-tRNA synthetase family. Homodimer.

It is found in the cytoplasm. It carries out the reaction tRNA(Asn) + L-asparagine + ATP = L-asparaginyl-tRNA(Asn) + AMP + diphosphate + H(+). This is Asparagine--tRNA ligase from Streptococcus suis (strain 05ZYH33).